Here is a 739-residue protein sequence, read N- to C-terminus: Prestin (739 aa).

At 1-76 (MEHVTVSEEP…PILTWLPSYP (76 aa)) the chain is on the cytoplasmic side. Residues 77–106 (LKEYLFGDIVSGISTGVMQLPQGLAYAMLA) form a helical membrane-spanning segment. At 107–109 (AVP) the chain is on the extracellular side. Residues 110 to 127 (PVFGLYSSFYPVLLYTFF) form a helical membrane-spanning segment. Topologically, residues 128–138 (GTSKHISIGTF) are cytoplasmic. Residues 139–152 (AVISLMIGGVAVRE) traverse the membrane as a helical segment. At 153 to 169 (APDSMFMVNGTNSSLVV) the chain is on the extracellular side. N-linked (GlcNAc...) asparagine glycans are attached at residues asparagine 161 and asparagine 164. A helical transmembrane segment spans residues 170–199 (NIEARDSRRVEVVVALTTLVGIIQFVLGLL). Residues 200–209 (RFGFLAIYLT) lie on the Cytoplasmic side of the membrane. A helical membrane pass occupies residues 210–233 (EPLVRGFTTAAAVHVSVSQLKYLL). Topologically, residues 234-244 (GVKTARFNGPL) are extracellular. The helical intramembrane region spans 245 to 256 (SVVYSLDAVLRN). At 257–261 (IADTN) the chain is on the extracellular side. A helical transmembrane segment spans residues 262–285 (IVTLIIGLGCTVFLYIIKQLNERF). The Cytoplasmic segment spans residues 286–294 (KKKLLIPIP). The chain crosses the membrane as a helical span at residues 295 to 310 (GEIIVVIVSTGISYGM). At 311–335 (LMSENYGVDVVGKIPTGLLPPKVPD) the chain is on the extracellular side. The chain crosses the membrane as a helical span at residues 336 to 370 (FSVFPNLFADAVPIAVVGFSITISLAKTFALKYGY). Over 371–373 (SVD) the chain is Cytoplasmic. The helical transmembrane segment at 374-391 (GNQELIALGLCNFVSSFF) threads the bilayer. At 392-399 (HTFVVTAS) the chain is on the extracellular side. The chain crosses the membrane as a helical span at residues 400 to 409 (MSRSLVQEST). Serine 401 is a salicylate binding site. At 410–413 (GGHT) the chain is on the cytoplasmic side. Residues 414–435 (EIAGLLASLLVLLVVVAIGFVF) form a helical membrane-spanning segment. The Extracellular portion of the chain corresponds to 436-439 (QPLP). A helical transmembrane segment spans residues 440–467 (TTVLAAIIMVNLLGMFKQTRDIPVLWRK). A topological domain (cytoplasmic) is located at residue serine 468. Residues 469-484 (KIELAIWLVSFFASVL) form a helical membrane-spanning segment. Over 485-486 (LG) the chain is Extracellular. A helical membrane pass occupies residues 487-507 (LDYGLAVAMAFAILTVIYRTQ). The segment at 508 to 731 (RPKNVVLGQI…AVLQCKRWRD (224 aa)) is extended region for STAS domain. The Cytoplasmic segment spans residues 508–739 (RPKNVVLGQI…RDLPVHPNIH (232 aa)). The region spanning 528–726 (EYEEAEECSG…PTIHDAVLQC (199 aa)) is the STAS domain.

This sequence belongs to the SLC26A/SulP transporter (TC 2.A.53) family. Homodimer. Interacts (via STAS domain) with CALM; this interaction is calcium-dependent. As to expression, expressed in hair cells of the auditory organs.

It is found in the cell membrane. The catalysed reaction is oxalate(in) + chloride(out) = oxalate(out) + chloride(in). It carries out the reaction sulfate(out) + chloride(in) = sulfate(in) + chloride(out). With respect to regulation, sulfate/chloride antiport activity is inhibited by salicylate; this inhibition is reversible. Electrogenic antiporter that exchanges sulfate or oxalate for chloride ion in a strictly coupled manner with a 1:1 stoichiometry. Adopts a dynamic conformation, which alternates between the exposure of the central binding site to the extra- and intracellular solutions leading to an inward-to-outward conformational transition during the transport cycle. Generates voltage-dependent charge movements resembling to the non-linear capacitance (NLC) of the cell membrane, but which are not associated to electromotile activity. The chain is Prestin from Danio rerio (Zebrafish).